Consider the following 943-residue polypeptide: Serine/threonine-protein kinase ATG1 (943 aa).

A Protein kinase domain is found at 22–327; sequence FVIDKEIGKG…FEDFFHHPVI (306 aa). Residues 28–36 and Lys-51 contribute to the ATP site; that span reads IGKGSFAQV. The active-site Proton acceptor is the Asp-165. 5 disordered regions span residues 334 to 468, 503 to 561, 774 to 800, 858 to 888, and 914 to 943; these read LVED…LTDE, QQGQ…SPGA, LPEEHPSHPSNRPPETSALGGSSGGQA, HLPKRRVSTSSKEEQSVAAQDASDDMSSDDK, and AASKAQQQQQQQQVVVRRRSGDVTPRSVPT. A compositionally biased stretch (basic and acidic residues) spans 338–352; it reads DIPKPEKPVLAETKS. The segment covering 517 to 529 has biased composition (polar residues); that stretch reads ATQQGHPTSTTGA. The span at 542–554 shows a compositional bias: basic and acidic residues; the sequence is RNDHYRKASHDKT. Low complexity predominate over residues 919-928; the sequence is QQQQQQQQVV.

Belongs to the protein kinase superfamily. Ser/Thr protein kinase family. APG1/unc-51/ULK1 subfamily. Homodimer. Forms a ternary complex with ATG13 and ATG17.

Its subcellular location is the cytoplasm. It localises to the preautophagosomal structure membrane. It catalyses the reaction L-seryl-[protein] + ATP = O-phospho-L-seryl-[protein] + ADP + H(+). It carries out the reaction L-threonyl-[protein] + ATP = O-phospho-L-threonyl-[protein] + ADP + H(+). In terms of biological role, serine/threonine protein kinase involved in the cytoplasm to vacuole transport (Cvt) and found to be essential in autophagy, where it is required for the formation of autophagosomes. Involved in the clearance of protein aggregates which cannot be efficiently cleared by the proteasome. Required for selective autophagic degradation of the nucleus (nucleophagy) as well as for mitophagy which contributes to regulate mitochondrial quantity and quality by eliminating the mitochondria to a basal level to fulfill cellular energy requirements and preventing excess ROS production. Also involved in endoplasmic reticulum-specific autophagic process, in selective removal of ER-associated degradation (ERAD) substrates. Plays a key role in ATG9 and ATG23 cycling through the pre-autophagosomal structure and is necessary to promote ATG18 binding to ATG9 through phosphorylation of ATG9. Catalyzes phosphorylation of ATG4, decreasing the interaction between ATG4 and ATG8 and impairing deconjugation of PE-conjugated forms of ATG8. The protein is Serine/threonine-protein kinase ATG1 of Chaetomium globosum (strain ATCC 6205 / CBS 148.51 / DSM 1962 / NBRC 6347 / NRRL 1970) (Soil fungus).